A 136-amino-acid chain; its full sequence is Orexigenic neuropeptide QRFP (136 aa).

The N-terminal stretch at 1 to 18 is a signal peptide; that stretch reads MVRPYPLIYFLFLPLGAC. Positions 19–90 are excised as a propeptide; that stretch reads FPLLDRREPT…HAGCRFRFGR (72 aa). At Q91 the chain carries Pyrrolidone carboxylic acid. F133 is modified (phenylalanine amide).

This sequence belongs to the RFamide neuropeptide family. Ligand for the G-protein coupled receptor QRFPR/GPR103. In terms of tissue distribution, expressed widely in the brain with highest expression levels in the cerebellum, medulla, pituitary, retina, vestibular nucleus, and white matter. Also expressed in the bladder, colon, coronary artery, parathyroid gland, prostate, testis, and thyroid.

The protein resides in the secreted. Stimulates feeding behavior, metabolic rate and locomotor activity and increases blood pressure. May have orexigenic activity. May promote aldosterone secretion by the adrenal gland. The protein is Orexigenic neuropeptide QRFP of Homo sapiens (Human).